Consider the following 271-residue polypeptide: Neurexophilin-1 (271 aa).

The signal sequence occupies residues 1-21; the sequence is MQAACWYVLLLLQPTVYLVTC. Positions 22-97 are II; it reads ANLTNGGKSE…WDWLRNSTDL (76 aa). N-linked (GlcNAc...) asparagine glycans are attached at residues Asn-23, Asn-68, Asn-93, Asn-146, Asn-156, and Asn-162. Residues 98-176 form an III region; the sequence is QEPRPRAKRR…LVPPTKIVEF (79 aa). An IV (linker domain) region spans residues 177–185; sequence DLAQQTVID. The interval 186 to 271 is v (Cys-rich); it reads AKDSKSFNCR…HSDTPYFPSG (86 aa).

Belongs to the neurexophilin family. May be proteolytically processed at the boundary between the N-terminal non-conserved and the central conserved domain in neuron-like cells.

It is found in the secreted. In terms of biological role, may be signaling molecules that resemble neuropeptides. Ligand for alpha-neurexins. The chain is Neurexophilin-1 (NXPH1) from Bos taurus (Bovine).